The sequence spans 131 residues: Protein FAM107B (131 aa).

A2 bears the N-acetylalanine mark. Disordered stretches follow at residues 39–78 (MNQKRGLAPQNKPELQKVMEKRKRDQVIKQKEEEAQKKKS) and 100–131 (KLQEEQENAPEFVKVKGNLRRTGQEVAQAQES). K50 carries the N6-acetyllysine modification. A compositionally biased stretch (basic and acidic residues) spans 52 to 78 (ELQKVMEKRKRDQVIKQKEEEAQKKKS). Positions 61 to 112 (KRDQVIKQKEEEAQKKKSDLEIELLKRQQKLEQLELEKQKLQEEQENAPEFV) form a coiled coil.

It belongs to the FAM107 family.

In Homo sapiens (Human), this protein is Protein FAM107B.